Consider the following 264-residue polypeptide: MRFKELILPLKIEEEELVEKFYEEGFFNFAIEEDKKGKKVLKIYLREGEPLPDFLKDWEIVDEKITTPKDWIVELEPFEIVEGIFIDPTEKINRRDAIVIKLSPGVAFGTGLHPTTRMSVFFLKKYLKEGNTVLDVGCGTGILAIAAKKLGASRVVAVDVDEQAVEVAEENVRKNDVDVLVKWSDLLSEVEGTFDIVVSNILAEIHVKLLEDVNRVTHRDSMLILSGIVDRKEDMVKRKASEHGWNVLERKQEREWVTLVMKRS.

The S-adenosyl-L-methionine site is built by T116, G137, D159, and N200.

The protein belongs to the methyltransferase superfamily. PrmA family.

The protein localises to the cytoplasm. The catalysed reaction is L-lysyl-[protein] + 3 S-adenosyl-L-methionine = N(6),N(6),N(6)-trimethyl-L-lysyl-[protein] + 3 S-adenosyl-L-homocysteine + 3 H(+). In terms of biological role, methylates ribosomal protein L11. The sequence is that of Ribosomal protein L11 methyltransferase from Thermotoga maritima (strain ATCC 43589 / DSM 3109 / JCM 10099 / NBRC 100826 / MSB8).